A 342-amino-acid polypeptide reads, in one-letter code: Protein FinQ (342 aa).

Residues 208–227 (RDREFNLLNAQISMVLYICS) constitute a DNA-binding region (H-T-H motif).

Functionally, transcriptional inhibitor of the F plasmid transfer genes. FinQ may regulate a gene or genes encoded on the IncI plasmids, and coincidentally may inhibit F transfer when coresident. This chain is Protein FinQ (finQ), found in Escherichia coli.